Here is a 359-residue protein sequence, read N- to C-terminus: Lactosylceramide 4-alpha-galactosyltransferase (359 aa).

At 1 to 30 the chain is on the cytoplasmic side; that stretch reads MGISCSHLEETMSKPPDCLLRMLRGTPRQR. Residues 31–51 traverse the membrane as a helical; Signal-anchor for type II membrane protein segment; it reads VFTFFIISFKFMFLISILIYW. The Lumenal segment spans residues 52–359; the sequence is HTVGAPKDQR…TTHRAMKMYL (308 aa). The DXD motif signature appears at 198–200; the sequence is DTD. N-linked (GlcNAc...) asparagine glycosylation is found at Asn-209 and Asn-315.

It belongs to the glycosyltransferase 32 family.

Its subcellular location is the golgi apparatus membrane. The enzyme catalyses a beta-D-Gal-(1-&gt;4)-beta-D-Glc-(1&lt;-&gt;1)-Cer(d18:1(4E)) + UDP-alpha-D-galactose = a globoside Gb3Cer (d18:1(4E)) + UDP + H(+). It carries out the reaction a beta-D-Gal-(1&lt;-&gt;1')-ceramide + UDP-alpha-D-galactose = alpha-D-Gal-(1-&gt;4)-beta-D-Gal-(1&lt;-&gt;1')-Cer + UDP + H(+). Its pathway is glycolipid biosynthesis. Its function is as follows. Catalyzes the transfer of galactose from UDP-alpha-D-galactose to lactosylceramide/beta-D-galactosyl-(1-&gt;4)-beta-D-glucosyl-(1&lt;-&gt;1)-ceramide(d18:1(4E)) to produce globotriaosylceramide/globoside Gb3Cer (d18:1(4E)). Also able to transfer galactose to galactosylceramide/beta-D-Gal-(1&lt;-&gt;1')-Cer. Globoside Gb3Cer is a glycosphingolipid of the globo serie, one of the major types of neutral root structures of glycosphingolipids, that constitute a significant portion of mammalian cell membranes. The sequence is that of Lactosylceramide 4-alpha-galactosyltransferase from Mus musculus (Mouse).